The sequence spans 360 residues: NAD(P)H-quinone oxidoreductase subunit 1, chloroplastic (360 aa).

8 consecutive transmembrane segments (helical) span residues 30–50, 98–118, 127–147, 165–185, 203–223, 248–268, 297–317, and 340–360; these read FLPI…LVWL, FSIG…VIPF, FNIG…GLLM, AAQS…ISLL, FWGW…ISSL, YSGI…LISS, IFGT…FLFI, and FLLP…VFSL.

The protein belongs to the complex I subunit 1 family. As to quaternary structure, NDH is composed of at least 16 different subunits, 5 of which are encoded in the nucleus.

It localises to the plastid. The protein resides in the chloroplast thylakoid membrane. It carries out the reaction a plastoquinone + NADH + (n+1) H(+)(in) = a plastoquinol + NAD(+) + n H(+)(out). It catalyses the reaction a plastoquinone + NADPH + (n+1) H(+)(in) = a plastoquinol + NADP(+) + n H(+)(out). Functionally, NDH shuttles electrons from NAD(P)H:plastoquinone, via FMN and iron-sulfur (Fe-S) centers, to quinones in the photosynthetic chain and possibly in a chloroplast respiratory chain. The immediate electron acceptor for the enzyme in this species is believed to be plastoquinone. Couples the redox reaction to proton translocation, and thus conserves the redox energy in a proton gradient. This chain is NAD(P)H-quinone oxidoreductase subunit 1, chloroplastic, found in Aethionema grandiflorum (Persian stone-cress).